Consider the following 127-residue polypeptide: Large ribosomal subunit protein bL17 (127 aa).

The protein belongs to the bacterial ribosomal protein bL17 family. Part of the 50S ribosomal subunit. Contacts protein L32.

The polypeptide is Large ribosomal subunit protein bL17 (Leuconostoc citreum (strain KM20)).